We begin with the raw amino-acid sequence, 473 residues long: Bifunctional protein HldE (473 aa).

Residues 1–317 are ribokinase; sequence MKLSMPRFDQ…RRAVQREQGS (317 aa). Residue 194 to 197 coordinates ATP; sequence NLSE. The active site involves Asp-263. Residues 343-473 form a cytidylyltransferase region; sequence FTNGCFDILH…TAIVEKIRQR (131 aa).

In the N-terminal section; belongs to the carbohydrate kinase PfkB family. This sequence in the C-terminal section; belongs to the cytidylyltransferase family. As to quaternary structure, homodimer.

It catalyses the reaction D-glycero-beta-D-manno-heptose 7-phosphate + ATP = D-glycero-beta-D-manno-heptose 1,7-bisphosphate + ADP + H(+). The catalysed reaction is D-glycero-beta-D-manno-heptose 1-phosphate + ATP + H(+) = ADP-D-glycero-beta-D-manno-heptose + diphosphate. It participates in nucleotide-sugar biosynthesis; ADP-L-glycero-beta-D-manno-heptose biosynthesis; ADP-L-glycero-beta-D-manno-heptose from D-glycero-beta-D-manno-heptose 7-phosphate: step 1/4. The protein operates within nucleotide-sugar biosynthesis; ADP-L-glycero-beta-D-manno-heptose biosynthesis; ADP-L-glycero-beta-D-manno-heptose from D-glycero-beta-D-manno-heptose 7-phosphate: step 3/4. Functionally, catalyzes the phosphorylation of D-glycero-D-manno-heptose 7-phosphate at the C-1 position to selectively form D-glycero-beta-D-manno-heptose-1,7-bisphosphate. In terms of biological role, catalyzes the ADP transfer from ATP to D-glycero-beta-D-manno-heptose 1-phosphate, yielding ADP-D-glycero-beta-D-manno-heptose. The chain is Bifunctional protein HldE from Pseudomonas aeruginosa (strain LESB58).